The sequence spans 347 residues: NADH-ubiquinone oxidoreductase chain 2 (347 aa).

10 helical membrane passes run 3–23 (PPILIIIMATIMTGTMIVMLS), 25–45 (HWLLIWIGFEMNMLAIIPILM), 66–86 (ASMLLMMGVTINLLYSGQWVI), 93–115 (IASIMMTTALTMKLGLSPFHFWV), 149–169 (INTNLLMLMALTSVLVGGWGG), 178–198 (IMAYSSIAHMGWMAAIITYNP), 201–221 (MILNLTLYILMTLSTFMLFML), 237–257 (FPLITSMILILMLSLGGLPPL), 274–294 (NMIIIPTLMAITALLNLYFYL), and 325–345 (LLPPLIITSTMLLPLTPMLSV).

The protein belongs to the complex I subunit 2 family. As to quaternary structure, core subunit of respiratory chain NADH dehydrogenase (Complex I) which is composed of 45 different subunits. Interacts with TMEM242.

It is found in the mitochondrion inner membrane. It catalyses the reaction a ubiquinone + NADH + 5 H(+)(in) = a ubiquinol + NAD(+) + 4 H(+)(out). Core subunit of the mitochondrial membrane respiratory chain NADH dehydrogenase (Complex I) which catalyzes electron transfer from NADH through the respiratory chain, using ubiquinone as an electron acceptor. Essential for the catalytic activity and assembly of complex I. This is NADH-ubiquinone oxidoreductase chain 2 from Canis lupus (Gray wolf).